Reading from the N-terminus, the 241-residue chain is Probable transcriptional regulatory protein AZOSEA20720 (241 aa).

The disordered stretch occupies residues 1 to 21 (MAGHSKWANIQHRKGRQDAKR).

The protein belongs to the TACO1 family.

It localises to the cytoplasm. The protein is Probable transcriptional regulatory protein AZOSEA20720 of Aromatoleum aromaticum (strain DSM 19018 / LMG 30748 / EbN1) (Azoarcus sp. (strain EbN1)).